A 180-amino-acid polypeptide reads, in one-letter code: Centromere protein M (180 aa).

It is found in the nucleus. Its subcellular location is the chromosome. It localises to the centromere. Probable component of a centromeric complex involved in assembly of kinetochore proteins, mitotic progression and chromosome segregation. This Xenopus laevis (African clawed frog) protein is Centromere protein M (cenpm).